The chain runs to 199 residues: Probable cobalt-precorrin-6B C(15)-methyltransferase (decarboxylating) (199 aa).

Residues Thr24, 48–52 (GCGTG), Asp72, and Ala101 each bind S-adenosyl-L-methionine.

The protein belongs to the methyltransferase superfamily. Archaeal-type CbiT family.

It carries out the reaction Co-precorrin-6B + S-adenosyl-L-methionine = Co-precorrin-7 + S-adenosyl-L-homocysteine + CO2. Its pathway is cofactor biosynthesis; adenosylcobalamin biosynthesis; cob(II)yrinate a,c-diamide from sirohydrochlorin (anaerobic route): step 8/10. In terms of biological role, catalyzes the methylation of C-15 in cobalt-precorrin-6B followed by the decarboxylation of C-12 to form cobalt-precorrin-7. This is Probable cobalt-precorrin-6B C(15)-methyltransferase (decarboxylating) from Saccharolobus solfataricus (strain ATCC 35092 / DSM 1617 / JCM 11322 / P2) (Sulfolobus solfataricus).